The following is a 286-amino-acid chain: GTP-binding protein 8 (286 aa).

The 174-residue stretch at 105 to 278 (KQPEVCFMGR…RCFIAHVTGK (174 aa)) folds into the EngB-type G domain. GTP is bound by residues 113–120 (GRSNVGKS), 142–146 (GHTKK), 160–163 (DMPG), 222–225 (TKID), and 257–259 (VSS). Mg(2+) contacts are provided by serine 120 and threonine 144.

The protein belongs to the TRAFAC class TrmE-Era-EngA-EngB-Septin-like GTPase superfamily. EngB GTPase family. Mg(2+) is required as a cofactor.

The sequence is that of GTP-binding protein 8 (gtpbp8) from Danio rerio (Zebrafish).